Consider the following 248-residue polypeptide: Orotidine 5'-phosphate decarboxylase (248 aa).

Residues D22, K44, 71–80, T131, R192, Q201, G221, and R222 contribute to the substrate site; that span reads DLKFHDIPNT. K73 acts as the Proton donor in catalysis.

This sequence belongs to the OMP decarboxylase family. Type 1 subfamily. Homodimer.

It carries out the reaction orotidine 5'-phosphate + H(+) = UMP + CO2. It functions in the pathway pyrimidine metabolism; UMP biosynthesis via de novo pathway; UMP from orotate: step 2/2. Catalyzes the decarboxylation of orotidine 5'-monophosphate (OMP) to uridine 5'-monophosphate (UMP). The chain is Orotidine 5'-phosphate decarboxylase from Photorhabdus laumondii subsp. laumondii (strain DSM 15139 / CIP 105565 / TT01) (Photorhabdus luminescens subsp. laumondii).